The sequence spans 447 residues: ATP-dependent protease ATPase subunit HslU (447 aa).

Residues Ile18, Gly60 to Glu65, Asp259, Glu325, and Arg397 each bind ATP.

The protein belongs to the ClpX chaperone family. HslU subfamily. A double ring-shaped homohexamer of HslV is capped on each side by a ring-shaped HslU homohexamer. The assembly of the HslU/HslV complex is dependent on binding of ATP.

The protein localises to the cytoplasm. Its function is as follows. ATPase subunit of a proteasome-like degradation complex; this subunit has chaperone activity. The binding of ATP and its subsequent hydrolysis by HslU are essential for unfolding of protein substrates subsequently hydrolyzed by HslV. HslU recognizes the N-terminal part of its protein substrates and unfolds these before they are guided to HslV for hydrolysis. This chain is ATP-dependent protease ATPase subunit HslU, found in Burkholderia lata (strain ATCC 17760 / DSM 23089 / LMG 22485 / NCIMB 9086 / R18194 / 383).